A 169-amino-acid polypeptide reads, in one-letter code: NADH-quinone oxidoreductase subunit B (169 aa).

The [4Fe-4S] cluster site is built by cysteine 42, cysteine 43, cysteine 107, and cysteine 136.

It belongs to the complex I 20 kDa subunit family. NDH-1 is composed of 14 different subunits. Subunits NuoB, C, D, E, F, and G constitute the peripheral sector of the complex. [4Fe-4S] cluster is required as a cofactor.

It is found in the cell inner membrane. It catalyses the reaction a quinone + NADH + 5 H(+)(in) = a quinol + NAD(+) + 4 H(+)(out). Functionally, NDH-1 shuttles electrons from NADH, via FMN and iron-sulfur (Fe-S) centers, to quinones in the respiratory chain. The immediate electron acceptor for the enzyme in this species is believed to be ubiquinone. Couples the redox reaction to proton translocation (for every two electrons transferred, four hydrogen ions are translocated across the cytoplasmic membrane), and thus conserves the redox energy in a proton gradient. This is NADH-quinone oxidoreductase subunit B from Helicobacter hepaticus (strain ATCC 51449 / 3B1).